We begin with the raw amino-acid sequence, 436 residues long: Cold sensitive U2 snRNA suppressor 1 (436 aa).

Over residues 1-10 (MARTKSRKRS) the composition is skewed to basic residues. Positions 1 to 22 (MARTKSRKRSGNNQNKNASVVN) are disordered. The segment covering 12 to 22 (NNQNKNASVVN) has biased composition (low complexity). A phosphothreonine mark is found at Thr-104 and Thr-112. Ser-114 carries the phosphoserine modification. Residues 374 to 436 (EFENSKEDTQ…SEKQLYTVLK (63 aa)) form a disordered region. Residues 389–408 (GRQDDKIDDEVEHKLDHFQE) show a composition bias toward basic and acidic residues.

The protein to mammalian SAP 145. Some, to C.elegans ZK632.11. As to quaternary structure, belongs to the CWC complex (or CEF1-associated complex), a spliceosome sub-complex reminiscent of a late-stage spliceosome composed of the U2, U5 and U6 snRNAs and at least BUD13, BUD31, BRR2, CDC40, CEF1, CLF1, CUS1, CWC2, CWC15, CWC21, CWC22, CWC23, CWC24, CWC25, CWC27, ECM2, HSH155, IST3, ISY1, LEA1, MSL1, NTC20, PRP8, PRP9, PRP11, PRP19, PRP21, PRP22, PRP45, PRP46, SLU7, SMB1, SMD1, SMD2, SMD3, SMX2, SMX3, SNT309, SNU114, SPP2, SYF1, SYF2, RSE1 and YJU2. Interacts with RDS3.

The protein resides in the nucleus. Essential splicing protein required for U2 snRNP binding to pre-mRNA during spliceosome assembly. This chain is Cold sensitive U2 snRNA suppressor 1 (CUS1), found in Saccharomyces cerevisiae (strain ATCC 204508 / S288c) (Baker's yeast).